The chain runs to 369 residues: Delta(6)-protoilludene synthase STEHIDRAFT_73029 (369 aa).

Asp107, Asn243, Ser247, and Glu251 together coordinate Mg(2+). The D(D/E)XX(D/E) motif motif lies at 107-111 (DEYSD). Positions 243–251 (NDIVSYNLE) match the NSE motif motif. (2E,6E)-farnesyl diphosphate-binding residues include Arg333 and Tyr334.

This sequence belongs to the terpene synthase family. It depends on Mg(2+) as a cofactor. The cofactor is Mn(2+). Ca(2+) is required as a cofactor. Ni(2+) serves as cofactor. Requires Co(2+) as cofactor.

The catalysed reaction is (2E,6E)-farnesyl diphosphate = Delta(6)-protoilludene + diphosphate. The enzyme catalyses (2E,6E)-farnesyl diphosphate = alpha-selinene + diphosphate. With respect to regulation, ca(2+) switches the cyclization mechanism of delta(6)-protoilludene synthase from 1,11 to 1,10 cyclization which leads to the production of beta-elemene. Functionally, terpene cyclase that catalyzes the cyclization of farnesyl diphosphate (FPP) to delta(6)-protoilludene. In presence of Ca(2+), a significant switch from 1,11 to a dual 1,11/1,10 cyclization occurs, producing beta-elemene as the major product, with lower levels of delta(6)-protoilludene and (E)-beta-caryophyllene, and traces of beta-selinene and alpha-selinene. The polypeptide is Delta(6)-protoilludene synthase STEHIDRAFT_73029 (Stereum hirsutum (strain FP-91666) (White-rot fungus)).